The chain runs to 486 residues: Stretch-activated cation channel yam8 (486 aa).

Residues 1–24 (MFFFSTHLILKILFFWSITRNIFG) form the signal peptide. At 25–464 (ATYTSLLLNN…PGVEFYESGS (440 aa)) the chain is on the extracellular side. N-linked (GlcNAc...) asparagine glycans are attached at residues Asn-33, Asn-49, Asn-59, Asn-82, and Asn-93. Residues 465-485 (ALLNISWRTFFISLIFWILFV) traverse the membrane as a helical segment. Position 486 (Glu-486) is a topological domain, cytoplasmic.

The protein localises to the cell membrane. Calcium-permeable, cation-selective stretch-activated channel (SAC) that functions together with CCH1 to mediate calcium entry into cells. Required during mating. The polypeptide is Stretch-activated cation channel yam8 (Schizosaccharomyces pombe (strain 972 / ATCC 24843) (Fission yeast)).